A 244-amino-acid polypeptide reads, in one-letter code: Probable 2-phosphosulfolactate phosphatase (244 aa).

This sequence belongs to the ComB family. Mg(2+) is required as a cofactor.

It carries out the reaction (2R)-O-phospho-3-sulfolactate + H2O = (2R)-3-sulfolactate + phosphate. The polypeptide is Probable 2-phosphosulfolactate phosphatase (Cyanothece sp. (strain PCC 7425 / ATCC 29141)).